A 138-amino-acid chain; its full sequence is Acidic phospholipase A2 MVL-PLA2 (138 aa).

Positions 1 to 16 (MRTLWIVAVCLMGVEG) are cleaved as a signal peptide. 7 disulfide bridges follow: Cys-42/Cys-131, Cys-44/Cys-60, Cys-59/Cys-111, Cys-65/Cys-138, Cys-66/Cys-104, Cys-73/Cys-97, and Cys-91/Cys-102. Tyr-43, Gly-45, and Gly-47 together coordinate Ca(2+). His-63 is a catalytic residue. Asp-64 serves as a coordination point for Ca(2+). The May inhibit integrin function (Atypical cell attachment site) signature appears at 86–88 (NGD). Asp-105 is an active-site residue.

Belongs to the phospholipase A2 family. Group II subfamily. D49 sub-subfamily. Ca(2+) is required as a cofactor. In terms of tissue distribution, expressed by the venom gland.

It is found in the secreted. It carries out the reaction a 1,2-diacyl-sn-glycero-3-phosphocholine + H2O = a 1-acyl-sn-glycero-3-phosphocholine + a fatty acid + H(+). Snake venom phospholipase A2 (PLA2) that displays an inhibitory effect, independent from its catalytic activity, on tumor cell adhesion and migration. This effect is mediated via specific inhibition of integrins alpha-5/beta-1 (ITGA5/ITGB1), alpha-v/beta-3 (ITGAV/ITGB3) and alpha-v/beta-6 (ITGAV/ITGB6). PLA2 catalyzes the calcium-dependent hydrolysis of the 2-acyl groups in 3-sn-phosphoglycerides. This is Acidic phospholipase A2 MVL-PLA2 from Macrovipera lebetina transmediterranea (Blunt-nosed viper).